A 530-amino-acid chain; its full sequence is Light-independent protochlorophyllide reductase subunit B (530 aa).

A [4Fe-4S] cluster-binding site is contributed by Asp-36. Asp-290 functions as the Proton donor in the catalytic mechanism. 425-426 provides a ligand contact to substrate; it reads GL.

Belongs to the ChlB/BchB/BchZ family. As to quaternary structure, protochlorophyllide reductase is composed of three subunits; ChlL, ChlN and ChlB. Forms a heterotetramer of two ChlB and two ChlN subunits. [4Fe-4S] cluster serves as cofactor.

It carries out the reaction chlorophyllide a + oxidized 2[4Fe-4S]-[ferredoxin] + 2 ADP + 2 phosphate = protochlorophyllide a + reduced 2[4Fe-4S]-[ferredoxin] + 2 ATP + 2 H2O. Its pathway is porphyrin-containing compound metabolism; chlorophyll biosynthesis (light-independent). Functionally, component of the dark-operative protochlorophyllide reductase (DPOR) that uses Mg-ATP and reduced ferredoxin to reduce ring D of protochlorophyllide (Pchlide) to form chlorophyllide a (Chlide). This reaction is light-independent. The NB-protein (ChlN-ChlB) is the catalytic component of the complex. In Synechococcus sp. (strain WH7803), this protein is Light-independent protochlorophyllide reductase subunit B.